Reading from the N-terminus, the 96-residue chain is Small ribosomal subunit protein bS21 (96 aa).

Over residues 37-52 the composition is skewed to basic and acidic residues; the sequence is EKPSEKKAREKAEAVR. Residues 37 to 96 are disordered; it reads EKPSEKKAREKAEAVRRARKLARKKLQREGLLPSKPKPVFGADRGRGAAGGAGGAPRPAR. The span at 53–62 shows a compositional bias: basic residues; that stretch reads RARKLARKKL.

This sequence belongs to the bacterial ribosomal protein bS21 family.

In Afipia carboxidovorans (strain ATCC 49405 / DSM 1227 / KCTC 32145 / OM5) (Oligotropha carboxidovorans), this protein is Small ribosomal subunit protein bS21.